A 346-amino-acid polypeptide reads, in one-letter code: Transcription factor 19 (346 aa).

The FHA domain maps to 31–88; that stretch reads YRLGCRADLCDVALRPQQEPGFISEVHAELHAERRGDDWRVSLEDHSSQGTLVNNVRL. Phosphoserine is present on Ser78. Disordered regions lie at residues 136 to 168 and 190 to 289; these read PRSR…TLSP and LTFS…AAGG. Residues 138–147 show a composition bias toward basic and acidic residues; that stretch reads SRGEEGETRA. Positions 190–208 are enriched in polar residues; the sequence is LTFSRSGSGPQNPPVSTTP. Basic and acidic residues predominate over residues 250–260; sequence EPRKKLLRVEK. Residues 294 to 343 form a PHD-type zinc finger; it reads AAPCCCLPQEETVAWVQCDGCDTWFHVACVGCSIQAAKEADFRCPGCRVG. Positions 297, 299, 311, 314, 319, 322, 337, and 340 each coordinate Zn(2+).

It is found in the nucleus. Functionally, potential transcription factor that may play a role in the regulation of genes involved in cell cycle G1/S transition. May bind to regulatory elements of genes, including the promoter of the transcription factor FOXO1. This is Transcription factor 19 (TCF19) from Sus scrofa (Pig).